Here is a 254-residue protein sequence, read N- to C-terminus: MNRRRRIYEGKAKILYEGPEPGTLVQFFKDDATAFNAKKHEVIDGKGVLNNRISEHIFTQLNRIGIPTHFIRRLNMREQLIKEVEIIPLEVVVRNVAAGSLAKRLGLEEGTILPRSIIEFYYKADALDDPMVTEEHITAFGWASPQEIDDIMALAIRVNDFLTGLFLGIGIQLVDFKMECGRLWEGDMMRIVVADEISPDSARLWDITTNDKLDKDRFRRDMGGLVEAYQEVARRLGIMNENDTPRPSGPTLVK.

This sequence belongs to the SAICAR synthetase family.

It catalyses the reaction 5-amino-1-(5-phospho-D-ribosyl)imidazole-4-carboxylate + L-aspartate + ATP = (2S)-2-[5-amino-1-(5-phospho-beta-D-ribosyl)imidazole-4-carboxamido]succinate + ADP + phosphate + 2 H(+). The protein operates within purine metabolism; IMP biosynthesis via de novo pathway; 5-amino-1-(5-phospho-D-ribosyl)imidazole-4-carboxamide from 5-amino-1-(5-phospho-D-ribosyl)imidazole-4-carboxylate: step 1/2. The sequence is that of Phosphoribosylaminoimidazole-succinocarboxamide synthase from Brucella canis (strain ATCC 23365 / NCTC 10854 / RM-666).